Consider the following 143-residue polypeptide: Anti-sigma F factor (143 aa).

Belongs to the anti-sigma-factor family.

It carries out the reaction L-seryl-[protein] + ATP = O-phospho-L-seryl-[protein] + ADP + H(+). The catalysed reaction is L-threonyl-[protein] + ATP = O-phospho-L-threonyl-[protein] + ADP + H(+). In terms of biological role, binds to sigma F and blocks its ability to form an RNA polymerase holoenzyme (E-sigma F). Phosphorylates SpoIIAA on a serine residue. This phosphorylation may enable SpoIIAA to act as an anti-anti-sigma factor that counteracts SpoIIAB and thus releases sigma F from inhibition. The protein is Anti-sigma F factor of Clostridium botulinum (strain Alaska E43 / Type E3).